A 230-amino-acid chain; its full sequence is Orotidine 5'-phosphate decarboxylase (230 aa).

Substrate is bound by residues aspartate 11, lysine 34, 61–70 (DLKLHDIPNT), threonine 117, arginine 179, glutamine 188, glycine 208, and arginine 209. Residue lysine 63 is the Proton donor of the active site.

Belongs to the OMP decarboxylase family. Type 1 subfamily. As to quaternary structure, homodimer.

It carries out the reaction orotidine 5'-phosphate + H(+) = UMP + CO2. The protein operates within pyrimidine metabolism; UMP biosynthesis via de novo pathway; UMP from orotate: step 2/2. Functionally, catalyzes the decarboxylation of orotidine 5'-monophosphate (OMP) to uridine 5'-monophosphate (UMP). This is Orotidine 5'-phosphate decarboxylase from Streptococcus pyogenes serotype M28 (strain MGAS6180).